Here is a 216-residue protein sequence, read N- to C-terminus: 3-isopropylmalate dehydratase small subunit (216 aa).

Belongs to the LeuD family. LeuD type 1 subfamily. In terms of assembly, heterodimer of LeuC and LeuD.

It carries out the reaction (2R,3S)-3-isopropylmalate = (2S)-2-isopropylmalate. It functions in the pathway amino-acid biosynthesis; L-leucine biosynthesis; L-leucine from 3-methyl-2-oxobutanoate: step 2/4. Catalyzes the isomerization between 2-isopropylmalate and 3-isopropylmalate, via the formation of 2-isopropylmaleate. The protein is 3-isopropylmalate dehydratase small subunit of Cupriavidus pinatubonensis (strain JMP 134 / LMG 1197) (Cupriavidus necator (strain JMP 134)).